A 114-amino-acid polypeptide reads, in one-letter code: Acetyltransferase At1g77540 (114 aa).

N-acetylthreonine is present on Thr-2. Residues 18–106 form the N-acetyltransferase domain; it reads KIVWNEGKRR…RNPSWKPLIH (89 aa). Residues 52 to 55 and 61 to 66 each bind CoA; these read HTYV and GLGLAS. Catalysis depends on Cys-87, which acts as the Nucleophile. Residues 88-89, Thr-93, and Arg-97 contribute to the CoA site; that span reads SY.

The protein resides in the peroxisome. Functionally, possesses in vitro histone acetyltransferase activity with histones H3 and H4. In Arabidopsis thaliana (Mouse-ear cress), this protein is Acetyltransferase At1g77540.